Here is a 720-residue protein sequence, read N- to C-terminus: Polyribonucleotide nucleotidyltransferase (720 aa).

Mg(2+)-binding residues include aspartate 487 and aspartate 493. The 60-residue stretch at 554–613 (PRIETFKIPTDKIREVIGTGGKVIREIVEKTGAKVNIEDDGTVKVASSDGEAMKAAIKWI) folds into the KH domain. An S1 motif domain is found at 623-691 (GQIYDGTVVK…DRGKTRLSMK (69 aa)). Positions 699–720 (EDLEAKDKVAEGEKAPREAAGE) are disordered. The span at 701–720 (LEAKDKVAEGEKAPREAAGE) shows a compositional bias: basic and acidic residues.

The protein belongs to the polyribonucleotide nucleotidyltransferase family. Mg(2+) is required as a cofactor.

Its subcellular location is the cytoplasm. The enzyme catalyses RNA(n+1) + phosphate = RNA(n) + a ribonucleoside 5'-diphosphate. In terms of biological role, involved in mRNA degradation. Catalyzes the phosphorolysis of single-stranded polyribonucleotides processively in the 3'- to 5'-direction. This chain is Polyribonucleotide nucleotidyltransferase, found in Bradyrhizobium diazoefficiens (strain JCM 10833 / BCRC 13528 / IAM 13628 / NBRC 14792 / USDA 110).